The following is a 327-amino-acid chain: Phenylalanine--tRNA ligase alpha subunit (327 aa).

Glu252 is a Mg(2+) binding site.

The protein belongs to the class-II aminoacyl-tRNA synthetase family. Phe-tRNA synthetase alpha subunit type 1 subfamily. As to quaternary structure, tetramer of two alpha and two beta subunits. It depends on Mg(2+) as a cofactor.

It localises to the cytoplasm. The enzyme catalyses tRNA(Phe) + L-phenylalanine + ATP = L-phenylalanyl-tRNA(Phe) + AMP + diphosphate + H(+). The polypeptide is Phenylalanine--tRNA ligase alpha subunit (Erwinia tasmaniensis (strain DSM 17950 / CFBP 7177 / CIP 109463 / NCPPB 4357 / Et1/99)).